We begin with the raw amino-acid sequence, 342 residues long: MLHEIPKSEILKELKRIGAKRVLIQSPEGLRREAEELAGFLEENNIEVFLHGEINYGACDPADREAKLVGCDALIHLGHSYMKLPLEVPTIFVPAFARVSVVEALKENIGEIKKLGRKIIVTTTAQHIHQLKEAKEFLESEGFEVSIGRGDSRISWPGQVLGCNYSVAKVRGEGILFIGSGIFHPLGLAVATRKKVLAIDPYTKAFSWIDPERFIRKRWAQIAKAMDAKKFGVIVSIKKGQLRLAEAKRIVKLLKKHGREARLIVMNDVNYHKLEGFPFEAYVVVACPRVPLDDYGAWRKPVLTPKEVEILLGLREEYEFDEILGGPRESDEPFGISIHSTR.

[4Fe-4S] cluster contacts are provided by cysteine 59, cysteine 163, and cysteine 287.

Belongs to the DPH1/DPH2 family. Homodimer. Requires [4Fe-4S] cluster as cofactor.

The catalysed reaction is L-histidyl-[translation elongation factor 2] + S-adenosyl-L-methionine = 2-[(3S)-amino-3-carboxypropyl]-L-histidyl-[translation elongation factor 2] + S-methyl-5'-thioadenosine + H(+). The protein operates within protein modification; peptidyl-diphthamide biosynthesis. Its function is as follows. Catalyzes the first step of diphthamide biosynthesis, i.e. the transfer of the 3-amino-3-carboxypropyl group from S-adenosyl-L-methionine (SAM) to the C2 position of the imidazole ring of the target histidine residue in translation elongation factor 2 (EF-2). The polypeptide is 2-(3-amino-3-carboxypropyl)histidine synthase (dph2) (Pyrococcus horikoshii (strain ATCC 700860 / DSM 12428 / JCM 9974 / NBRC 100139 / OT-3)).